A 423-amino-acid polypeptide reads, in one-letter code: Subtilisin-like protease 2 (423 aa).

The N-terminal stretch at 1 to 17 (MQLLNLGLLLLLPFVAG) is a signal peptide. The propeptide occupies 18 to 123 (EIAPQPEPLR…VHPDQHVYLA (106 aa)). One can recognise an Inhibitor I9 domain in the interval 37 to 123 (QYIVTLKEGL…VHPDQHVYLA (87 aa)). The Peptidase S8 domain maps to 132–423 (RWGLGYMSSK…RKFTLPKNTK (292 aa)). Catalysis depends on charge relay system residues aspartate 170 and histidine 202. N-linked (GlcNAc...) asparagine glycans are attached at residues asparagine 249, asparagine 262, and asparagine 349. Serine 358 serves as the catalytic Charge relay system. Asparagine 389 carries an N-linked (GlcNAc...) asparagine glycan.

This sequence belongs to the peptidase S8 family.

The protein resides in the secreted. In terms of biological role, secreted subtilisin-like serine protease with keratinolytic activity that contributes to pathogenicity. The polypeptide is Subtilisin-like protease 2 (SUB2) (Arthroderma otae (strain ATCC MYA-4605 / CBS 113480) (Microsporum canis)).